Here is a 592-residue protein sequence, read N- to C-terminus: Bifunctional enzyme BirA/CoaX (592 aa).

A biotin--protein ligase region spans residues 1–329 (MTVLKLSHWR…ISLRSDDRPV (329 aa)). Positions 83–259 (QTALKHECAS…ELDAVLLQYA (177 aa)) constitute a BPL/LPL catalytic domain. Residues 336 to 592 (DSERFLLLDG…AAEGREYEHI (257 aa)) form a type III pantothenate kinase region. 344–351 (DGGNSRLK) provides a ligand contact to ATP. Residues Tyr-426 and 433–436 (GSDR) contribute to the substrate site. Asp-435 serves as the catalytic Proton acceptor. Thr-458 is an ATP binding site. A substrate-binding site is contributed by Thr-508.

It in the N-terminal section; belongs to the biotin--protein ligase family. The protein in the C-terminal section; belongs to the type III pantothenate kinase family. It depends on NH4(+) as a cofactor. The cofactor is K(+).

It is found in the cytoplasm. The catalysed reaction is biotin + L-lysyl-[protein] + ATP = N(6)-biotinyl-L-lysyl-[protein] + AMP + diphosphate + H(+). It carries out the reaction (R)-pantothenate + ATP = (R)-4'-phosphopantothenate + ADP + H(+). The protein operates within cofactor biosynthesis; coenzyme A biosynthesis; CoA from (R)-pantothenate: step 1/5. In terms of biological role, activates biotin to form biotinyl-5'-adenylate and transfers the biotin moiety to biotin-accepting proteins. Functionally, catalyzes the phosphorylation of pantothenate (Pan), the first step in CoA biosynthesis. The sequence is that of Bifunctional enzyme BirA/CoaX (birA/coaX) from Neisseria meningitidis serogroup B (strain ATCC BAA-335 / MC58).